The chain runs to 77 residues: Large ribosomal subunit protein bL28 (77 aa).

The tract at residues 1 to 21 is disordered; that stretch reads MARVCKVTGKRPMTGNNVSHA.

It belongs to the bacterial ribosomal protein bL28 family.

The protein is Large ribosomal subunit protein bL28 of Chromobacterium violaceum (strain ATCC 12472 / DSM 30191 / JCM 1249 / CCUG 213 / NBRC 12614 / NCIMB 9131 / NCTC 9757 / MK).